A 219-amino-acid polypeptide reads, in one-letter code: Biofilm-associated metzincin protease inhibitor (219 aa).

Residues 4–24 (TWIYAASAAAIGGALIGGWLL) form a helical membrane-spanning segment. Over residues 191-204 (DIAARSDPHGDHVD) the composition is skewed to basic and acidic residues. Residues 191-219 (DIAARSDPHGDHVDAPLAELPPMPPPAQG) are disordered. Positions 209–219 (ELPPMPPPAQG) are enriched in pro residues.

It localises to the cell membrane. In terms of biological role, inhibitor of the metalloendopeptidase Mep72. Forms a protein-protein complex with the protease, which is the product of its coregulated adjacent gene, and probably prevents premature protease activity until the protein has been secreted. In Pseudomonas aeruginosa (strain ATCC 15692 / DSM 22644 / CIP 104116 / JCM 14847 / LMG 12228 / 1C / PRS 101 / PAO1), this protein is Biofilm-associated metzincin protease inhibitor.